We begin with the raw amino-acid sequence, 399 residues long: Forkhead box protein A4-A (399 aa).

The segment at residues 119 to 213 is a DNA-binding region (fork-head); it reads KPPYSYISLI…ENGCYLRRQK (95 aa). The span at 219–234 shows a compositional bias: basic and acidic residues; it reads RSKSGEGEKKVNKPGE. The segment at 219–290 is disordered; it reads RSKSGEGEKK…VGLSPTSEQA (72 aa). The segment covering 267–277 has biased composition (polar residues); that stretch reads STGSSIHQACG.

In terms of tissue distribution, during stages 8.5 to 10, expressed in the part of the dorsal mesoderm invaginating the dorsal blastopore lip (Spemann organizer), as a direct response to dorsal mesodermal induction. At stage 12 (mid-gastrulation), restricted to the dorsal midline in the deeper layers of mesodermal cells. Continuously present in the posterior portion of invaginated mesoderm and expressed within the notochord. Also present in the midline of the neural plate during gastrulation, but absent from the notoplate in exogastrula embryos. Expression in the notochord continues in neurula-stage embryos and at stage 20 in addition to the notochord, expression is seen in the pharyngeal endoderm.

The protein resides in the nucleus. In terms of biological role, transcriptional repressor involved in embryonic nervous system development. Plays a role in the induction and patterning of the anterior-posterior neural axis. Involved in the establishment of floor plate differentiation from neural plate cells during gastrulation. Binds the anf1 promoter sequence to restrict expression of anf1 to the anterior of the neural plate, thereby patterning the forebrain. Can bind to the HNF-3-alpha DNA target sequence. Cooperates with t/bra in a dose-dependent manner to specify dorsal mesoderm formation, including notochord. Binds to DNA via the target sequence 5'-[GA]TAAA[TC]A-3', with 5'-GTAAATA-3' being the preferred binding site. The chain is Forkhead box protein A4-A (foxa4-a) from Xenopus laevis (African clawed frog).